A 156-amino-acid chain; its full sequence is Ribosomal RNA large subunit methyltransferase H (156 aa).

S-adenosyl-L-methionine is bound by residues leucine 73, glycine 104, and 123–128 (LSPLTL).

This sequence belongs to the RNA methyltransferase RlmH family. Homodimer.

The protein resides in the cytoplasm. It catalyses the reaction pseudouridine(1915) in 23S rRNA + S-adenosyl-L-methionine = N(3)-methylpseudouridine(1915) in 23S rRNA + S-adenosyl-L-homocysteine + H(+). Its function is as follows. Specifically methylates the pseudouridine at position 1915 (m3Psi1915) in 23S rRNA. The chain is Ribosomal RNA large subunit methyltransferase H from Yersinia enterocolitica serotype O:8 / biotype 1B (strain NCTC 13174 / 8081).